Reading from the N-terminus, the 270-residue chain is Phosphatidylglycerol--prolipoprotein diacylglyceryl transferase (270 aa).

4 consecutive transmembrane segments (helical) span residues 19–39, 56–76, 92–112, and 116–136; these read FPVY…LWLA, LVLI…VIFE, QGGL…ILFA, and GVSF…GQAI. Residue Arg138 participates in a 1,2-diacyl-sn-glycero-3-phospho-(1'-sn-glycerol) binding. A run of 3 helical transmembrane segments spans residues 178–198, 206–226, and 236–256; these read HPTF…LLAL, GELF…VEGL, and LRIA…FIIV.

It belongs to the Lgt family.

Its subcellular location is the cell membrane. The enzyme catalyses L-cysteinyl-[prolipoprotein] + a 1,2-diacyl-sn-glycero-3-phospho-(1'-sn-glycerol) = an S-1,2-diacyl-sn-glyceryl-L-cysteinyl-[prolipoprotein] + sn-glycerol 1-phosphate + H(+). It participates in protein modification; lipoprotein biosynthesis (diacylglyceryl transfer). Catalyzes the transfer of the diacylglyceryl group from phosphatidylglycerol to the sulfhydryl group of the N-terminal cysteine of a prolipoprotein, the first step in the formation of mature lipoproteins. This Bacillus cereus (strain Q1) protein is Phosphatidylglycerol--prolipoprotein diacylglyceryl transferase.